Consider the following 688-residue polypeptide: G-protein coupled receptor-associated protein LMBRD2 (688 aa).

Residues 1–3 lie on the Extracellular side of the membrane; it reads MSG. The helical transmembrane segment at 4 to 21 threads the bilayer; the sequence is AALGLEIVFVFFLALFLL. Residues 22-32 are Cytoplasmic-facing; it reads HRYGDFKKQHR. The chain crosses the membrane as a helical span at residues 33-53; sequence LVIIATLLAWYLCFLIVFILP. At 54-99 the chain is on the extracellular side; that stretch reads LDVSTTIYNRCKLAVNSSPAESNSSFVTLAPSKQQCFKPWSYIPNG. An N-linked (GlcNAc...) asparagine glycan is attached at Asn76. A helical transmembrane segment spans residues 100-120; it reads IMPIFWRVVYWTSQFLTWILL. Residues 121 to 144 are Cytoplasmic-facing; sequence PFMQSYARSGGFSITGKIKTALIE. Residues 145–165 traverse the membrane as a helical segment; it reads NAIYYGTYLLIFGAFLIYVAV. Residues 166-180 lie on the Extracellular side of the membrane; that stretch reads NPKFNLQWNQLQTIG. Residues 181 to 201 traverse the membrane as a helical segment; sequence IAAANTWGLFLLVLLLGYGLV. Topologically, residues 202-381 are cytoplasmic; that stretch reads EIPRSHWNGA…ECLLRPWFYR (180 aa). Residues 222 to 254 adopt a coiled-coil conformation; it reads FKAAKLMTEKADAEENLEDIMEEVRKVSESIKY. A helical membrane pass occupies residues 382–402; it reads VLAVVLAAFSVIVVWSECTFF. The Extracellular segment spans residues 403-426; it reads STRPVLSLVAVFIQLAEKTYNYIY. Residues 427–447 form a helical membrane-spanning segment; it reads IEMACFLTIFFLSICVYSTVF. Topologically, residues 448–467 are cytoplasmic; sequence RIRVFNYYYLASHHQTDAYS. The helical transmembrane segment at 468-488 threads the bilayer; that stretch reads LLFSGMLFCRLTPPLCLNFLG. Residues 489 to 515 lie on the Extracellular side of the membrane; that stretch reads LTHMDATISHTDAQPTAYTSIMGSMKV. Residues 516–536 traverse the membrane as a helical segment; it reads LSFIADGFYIYYPMLVVILCI. Over 537–688 the chain is Cytoplasmic; sequence ATYFSLGTRC…MSRSRIFEDV (152 aa). Positions 600-617 are enriched in basic and acidic residues; sequence REDSTRNRVVHTEQKESS. Positions 600-673 are disordered; that stretch reads REDSTRNRVV…ESDSGRYQPG (74 aa). The span at 618–634 shows a compositional bias: polar residues; it reads FSETNTNRPLSKYTRTN. Residues 635–644 show a composition bias toward basic and acidic residues; the sequence is GRTERDRIEL.

The protein belongs to the LIMR family.

The protein localises to the cell membrane. In terms of biological role, may associate with G-protein coupled receptors and regulate downstream signaling pathways. This is G-protein coupled receptor-associated protein LMBRD2 from Gallus gallus (Chicken).